Here is a 2217-residue protein sequence, read N- to C-terminus: DNA polymerase epsilon catalytic subunit A (2217 aa).

The Zn(2+) site is built by cysteine 2104, cysteine 2107, cysteine 2126, and cysteine 2129. The CysA-type zinc-finger motif lies at 2104 to 2129 (CEYCSYVSDLDLCRDGLDGKFQCPRC). [4Fe-4S] cluster is bound by residues cysteine 2160, cysteine 2163, cysteine 2175, and cysteine 2177. Positions 2160 to 2177 (CEKCHTVKRDLMSTNCNC) match the CysB motif motif.

It belongs to the DNA polymerase type-B family. As to quaternary structure, heterotetramer. Consists of 4 subunits: POL2, DPB2, DPB3 and DPB4. [4Fe-4S] cluster serves as cofactor.

The protein localises to the nucleus. It catalyses the reaction DNA(n) + a 2'-deoxyribonucleoside 5'-triphosphate = DNA(n+1) + diphosphate. Its function is as follows. DNA polymerase II participates in chromosomal DNA replication. The protein is DNA polymerase epsilon catalytic subunit A (POL2) of Candida glabrata (strain ATCC 2001 / BCRC 20586 / JCM 3761 / NBRC 0622 / NRRL Y-65 / CBS 138) (Yeast).